The chain runs to 69 residues: DNA-directed RNA polymerase subunit omega (69 aa).

Belongs to the RNA polymerase subunit omega family. In terms of assembly, the RNAP catalytic core consists of 2 alpha, 1 beta, 1 beta' and 1 omega subunit. When a sigma factor is associated with the core the holoenzyme is formed, which can initiate transcription.

It carries out the reaction RNA(n) + a ribonucleoside 5'-triphosphate = RNA(n+1) + diphosphate. Promotes RNA polymerase assembly. Latches the N- and C-terminal regions of the beta' subunit thereby facilitating its interaction with the beta and alpha subunits. This chain is DNA-directed RNA polymerase subunit omega, found in Heliobacterium modesticaldum (strain ATCC 51547 / Ice1).